The sequence spans 373 residues: Histone-lysine N-methyltransferase SETD7 (373 aa).

The tract at residues 1-20 (MDSDDDNMEEVVEGPLDEDD) is disordered. MORN repeat units follow at residues 36-58 (FEGH…DGST), 59-81 (LEGF…DGGA), and 106-128 (FRGR…DGAC). An SET domain is found at 214 to 336 (QRVYVGQSLI…KDEELTVAYG (123 aa)). S-adenosyl-L-methionine-binding positions include 226–228 (AGE), asparagine 296, and histidine 297.

It belongs to the class V-like SAM-binding methyltransferase superfamily. Histone-lysine methyltransferase family. SET7 subfamily.

The protein resides in the nucleus. It localises to the chromosome. The enzyme catalyses L-lysyl(4)-[histone H3] + S-adenosyl-L-methionine = N(6)-methyl-L-lysyl(4)-[histone H3] + S-adenosyl-L-homocysteine + H(+). It catalyses the reaction L-lysyl-[protein] + S-adenosyl-L-methionine = N(6)-methyl-L-lysyl-[protein] + S-adenosyl-L-homocysteine + H(+). In terms of biological role, histone methyltransferase that specifically monomethylates 'Lys-4' of histone H3. H3 'Lys-4' methylation represents a specific tag for epigenetic transcriptional activation. Plays a central role in the transcriptional activation of genes. Also has methyltransferase activity toward non-histone proteins. In Danio rerio (Zebrafish), this protein is Histone-lysine N-methyltransferase SETD7 (setd7).